Consider the following 354-residue polypeptide: Alanine racemase (354 aa).

The active-site Proton acceptor; specific for D-alanine is K33. An N6-(pyridoxal phosphate)lysine modification is found at K33. Residue R127 coordinates substrate. The Proton acceptor; specific for L-alanine role is filled by Y251. Residue M299 coordinates substrate.

It belongs to the alanine racemase family. Pyridoxal 5'-phosphate serves as cofactor.

The catalysed reaction is L-alanine = D-alanine. The protein operates within amino-acid biosynthesis; D-alanine biosynthesis; D-alanine from L-alanine: step 1/1. Functionally, catalyzes the interconversion of L-alanine and D-alanine. May also act on other amino acids. The chain is Alanine racemase (alr) from Fusobacterium nucleatum subsp. nucleatum (strain ATCC 25586 / DSM 15643 / BCRC 10681 / CIP 101130 / JCM 8532 / KCTC 2640 / LMG 13131 / VPI 4355).